The chain runs to 75 residues: U6-lycotoxin-Ls1b (75 aa).

Positions 1–21 (MKLLLFTALVLVVISLIEVEA) are cleaved as a signal peptide. The propeptide occupies 22–25 (ENER).

It belongs to the neurotoxin 19 (CSTX) family. 06 (U6-Lctx) subfamily. Post-translationally, contains 4 disulfide bonds. As to expression, expressed by the venom gland.

Its subcellular location is the secreted. This Lycosa singoriensis (Wolf spider) protein is U6-lycotoxin-Ls1b.